A 985-amino-acid chain; its full sequence is Exocyst complex component 4 (985 aa).

The stretch at 36–70 forms a coiled coil; it reads SETTEERQKEKQKIEAEFKRSDLRLNELVSRHDQQ. Phosphoserine is present on residues serine 235, serine 456, serine 459, serine 682, and serine 686. The disordered stretch occupies residues 434–480; the sequence is DKSSHVGTSNNSDAFKEHRRNASDASVDDNLAGQLGGSGKGSTSGLF.

Belongs to the SEC8 family. The exocyst complex is composed of Sec3/Exoc1, Sec5/Exoc2, Sec6/Exoc3, Sec8/Exoc4, Sec10/Exoc5, Sec15/Exoc6, exo70/Exoc7 and Exo84/Exoc8. Abundant in the embryonic and larval glutamatergic neuromuscular junctions (NMJs), pre and postsynaptically.

Its function is as follows. Component of the exocyst complex involved in the docking of exocytic vesicles with fusion sites on the plasma membrane. Involved in regulation of synaptic microtubule formation, and also regulation of synaptic growth and glutamate receptor trafficking. Does not appear to be required for basal neurotransmission. The chain is Exocyst complex component 4 from Drosophila melanogaster (Fruit fly).